Here is a 429-residue protein sequence, read N- to C-terminus: Probable M18 family aminopeptidase 2 (429 aa).

Zn(2+) is bound by residues His82, His156, and His401.

It belongs to the peptidase M18 family. Zn(2+) is required as a cofactor.

The protein is Probable M18 family aminopeptidase 2 of Ectopseudomonas mendocina (strain ymp) (Pseudomonas mendocina).